The chain runs to 275 residues: Release factor glutamine methyltransferase (275 aa).

S-adenosyl-L-methionine contacts are provided by residues 117–121 (GTGSG), Asp-140, Trp-168, and Asn-182. Residue 182–185 (NPPY) coordinates substrate.

The protein belongs to the protein N5-glutamine methyltransferase family. PrmC subfamily.

The catalysed reaction is L-glutaminyl-[peptide chain release factor] + S-adenosyl-L-methionine = N(5)-methyl-L-glutaminyl-[peptide chain release factor] + S-adenosyl-L-homocysteine + H(+). In terms of biological role, methylates the class 1 translation termination release factors RF1/PrfA and RF2/PrfB on the glutamine residue of the universally conserved GGQ motif. This is Release factor glutamine methyltransferase from Buchnera aphidicola subsp. Schizaphis graminum (strain Sg).